Reading from the N-terminus, the 455-residue chain is Nucleoside-triphosphatase (455 aa).

Glutamate 168 (proton acceptor) is an active-site residue.

This sequence belongs to the GDA1/CD39 NTPase family.

Its subcellular location is the nucleus. The enzyme catalyses a ribonucleoside 5'-triphosphate + H2O = a ribonucleoside 5'-diphosphate + phosphate + H(+). Its function is as follows. Might be involved in RNA transport out of nuclei. The sequence is that of Nucleoside-triphosphatase from Pisum sativum (Garden pea).